We begin with the raw amino-acid sequence, 123 residues long: Small ribosomal subunit protein uS12 (123 aa).

The residue at position 89 (Asp-89) is a 3-methylthioaspartic acid.

Belongs to the universal ribosomal protein uS12 family. In terms of assembly, part of the 30S ribosomal subunit. Contacts proteins S8 and S17. May interact with IF1 in the 30S initiation complex.

Its function is as follows. With S4 and S5 plays an important role in translational accuracy. Functionally, interacts with and stabilizes bases of the 16S rRNA that are involved in tRNA selection in the A site and with the mRNA backbone. Located at the interface of the 30S and 50S subunits, it traverses the body of the 30S subunit contacting proteins on the other side and probably holding the rRNA structure together. The combined cluster of proteins S8, S12 and S17 appears to hold together the shoulder and platform of the 30S subunit. The sequence is that of Small ribosomal subunit protein uS12 from Maridesulfovibrio salexigens (strain ATCC 14822 / DSM 2638 / NCIMB 8403 / VKM B-1763) (Desulfovibrio salexigens).